Here is a 306-residue protein sequence, read N- to C-terminus: Porphobilinogen deaminase (306 aa).

Cysteine 239 carries the post-translational modification S-(dipyrrolylmethanemethyl)cysteine.

The protein belongs to the HMBS family. As to quaternary structure, monomer. Dipyrromethane is required as a cofactor.

The enzyme catalyses 4 porphobilinogen + H2O = hydroxymethylbilane + 4 NH4(+). It participates in porphyrin-containing compound metabolism; protoporphyrin-IX biosynthesis; coproporphyrinogen-III from 5-aminolevulinate: step 2/4. Functionally, tetrapolymerization of the monopyrrole PBG into the hydroxymethylbilane pre-uroporphyrinogen in several discrete steps. This chain is Porphobilinogen deaminase, found in Helicobacter acinonychis (strain Sheeba).